The primary structure comprises 205 residues: Putative 3-methyladenine DNA glycosylase (205 aa).

This sequence belongs to the DNA glycosylase MPG family.

This Bacillus cereus (strain B4264) protein is Putative 3-methyladenine DNA glycosylase.